The primary structure comprises 310 residues: Probable manganese-dependent inorganic pyrophosphatase (310 aa).

Residues His10, Asp14, Asp16, Asp75, His97, and Asp149 each contribute to the Mn(2+) site.

It belongs to the PPase class C family. The cofactor is Mn(2+).

It localises to the cytoplasm. It catalyses the reaction diphosphate + H2O = 2 phosphate + H(+). The chain is Probable manganese-dependent inorganic pyrophosphatase from Clostridium acetobutylicum (strain ATCC 824 / DSM 792 / JCM 1419 / IAM 19013 / LMG 5710 / NBRC 13948 / NRRL B-527 / VKM B-1787 / 2291 / W).